The chain runs to 638 residues: 1,4-alpha-glucan branching enzyme GlgB (638 aa).

The Nucleophile role is filled by D320. Catalysis depends on E373, which acts as the Proton donor.

It belongs to the glycosyl hydrolase 13 family. GlgB subfamily. As to quaternary structure, monomer.

It catalyses the reaction Transfers a segment of a (1-&gt;4)-alpha-D-glucan chain to a primary hydroxy group in a similar glucan chain.. It functions in the pathway glycan biosynthesis; glycogen biosynthesis. In terms of biological role, catalyzes the formation of the alpha-1,6-glucosidic linkages in glycogen by scission of a 1,4-alpha-linked oligosaccharide from growing alpha-1,4-glucan chains and the subsequent attachment of the oligosaccharide to the alpha-1,6 position. The polypeptide is 1,4-alpha-glucan branching enzyme GlgB (Oleidesulfovibrio alaskensis (strain ATCC BAA-1058 / DSM 17464 / G20) (Desulfovibrio alaskensis)).